Here is a 105-residue protein sequence, read N- to C-terminus: DNA-directed RNA polymerase subunit omega (105 aa).

Belongs to the RNA polymerase subunit omega family. The RNAP catalytic core consists of 2 alpha, 1 beta, 1 beta' and 1 omega subunit. When a sigma factor is associated with the core the holoenzyme is formed, which can initiate transcription.

It carries out the reaction RNA(n) + a ribonucleoside 5'-triphosphate = RNA(n+1) + diphosphate. Its function is as follows. Promotes RNA polymerase assembly. Latches the N- and C-terminal regions of the beta' subunit thereby facilitating its interaction with the beta and alpha subunits. This chain is DNA-directed RNA polymerase subunit omega, found in Streptococcus equi subsp. zooepidemicus (strain MGCS10565).